The following is a 440-amino-acid chain: G-protein coupled receptor family C group 5 member C (440 aa).

An N-terminal signal peptide occupies residues 1-22 (MATHRTLLMCLGLPLFFPGALA). At 23–49 (QNHAPPGCSPDLDPLYYNLCDRSGAWG) the chain is on the extracellular side. A helical transmembrane segment spans residues 50-70 (IVSEAVAGAGIITTFVLTIIL). At 71-84 (VASLPFVQDTKKRS) the chain is on the cytoplasmic side. The helical transmembrane segment at 85–105 (LLGTQVFFLLGTLGLFCLVFA) threads the bilayer. Topologically, residues 106–119 (CVVKPDFSTCASRR) are extracellular. The helical transmembrane segment at 120–140 (FLFGVLFAICFSCLVAHVLSL) threads the bilayer. Residues 141 to 155 (NFLTRKNHGPRGWVI) lie on the Cytoplasmic side of the membrane. Residues 156-176 (FTVALLLTLVEVIINTEWLII) form a helical membrane-spanning segment. Topologically, residues 177 to 207 (TLVRGGGQVSPLGNVSADSTMTSPCAIANMD) are extracellular. N-linked (GlcNAc...) asparagine glycosylation is present at N190. The chain crosses the membrane as a helical span at residues 208-228 (FVMALIYVMLLLLTAFLGAWP). Topologically, residues 229–240 (TLCGRFKRWRKH) are cytoplasmic. The chain crosses the membrane as a helical span at residues 241–261 (GVFVLLTTVISIAIWVVWIVM). Residues 262–278 (YTYGNEQHHSPTWDDPT) lie on the Extracellular side of the membrane. The helical transmembrane segment at 279 to 299 (LAIALAANAWTFVLFYVIPEV) threads the bilayer. Residues 300-440 (SQVTKPSPEQ…QVFRNPYVWD (141 aa)) lie on the Cytoplasmic side of the membrane. Residues S343, S382, S402, and S405 each carry the phosphoserine modification. The residue at position 413 (Y413) is a Phosphotyrosine. Phosphothreonine is present on T422.

It belongs to the G-protein coupled receptor 3 family.

The protein resides in the cell membrane. Functionally, this retinoic acid-inducible G-protein coupled receptor provide evidence for a possible interaction between retinoid and G-protein signaling pathways. The protein is G-protein coupled receptor family C group 5 member C (Gprc5c) of Mus musculus (Mouse).